A 470-amino-acid chain; its full sequence is Glutamate--tRNA ligase (470 aa).

Positions 9–19 (PSPTGFLHVGG) match the 'HIGH' region motif. Residues 236–240 (KLSKR) carry the 'KMSKS' region motif. Lys-239 contributes to the ATP binding site.

It belongs to the class-I aminoacyl-tRNA synthetase family. Glutamate--tRNA ligase type 1 subfamily. In terms of assembly, monomer.

Its subcellular location is the cytoplasm. It catalyses the reaction tRNA(Glu) + L-glutamate + ATP = L-glutamyl-tRNA(Glu) + AMP + diphosphate. Functionally, catalyzes the attachment of glutamate to tRNA(Glu) in a two-step reaction: glutamate is first activated by ATP to form Glu-AMP and then transferred to the acceptor end of tRNA(Glu). The chain is Glutamate--tRNA ligase from Psychromonas ingrahamii (strain DSM 17664 / CCUG 51855 / 37).